A 407-amino-acid polypeptide reads, in one-letter code: Argininosuccinate synthase (407 aa).

An ATP-binding site is contributed by 8–16 (AYSGGLDTT). Residues Tyr86 and Ser91 each contribute to the L-citrulline site. ATP is bound at residue Gly116. L-aspartate is bound by residues Thr118, Asn122, and Asp123. Asn122 contacts L-citrulline. L-citrulline is bound by residues Arg126, Ser178, Ser187, Glu264, and Tyr276.

This sequence belongs to the argininosuccinate synthase family. Type 1 subfamily. As to quaternary structure, homotetramer.

Its subcellular location is the cytoplasm. The enzyme catalyses L-citrulline + L-aspartate + ATP = 2-(N(omega)-L-arginino)succinate + AMP + diphosphate + H(+). Its pathway is amino-acid biosynthesis; L-arginine biosynthesis; L-arginine from L-ornithine and carbamoyl phosphate: step 2/3. In Lachnoclostridium phytofermentans (strain ATCC 700394 / DSM 18823 / ISDg) (Clostridium phytofermentans), this protein is Argininosuccinate synthase.